A 316-amino-acid chain; its full sequence is Acetyl-coenzyme A carboxylase carboxyl transferase subunit alpha (316 aa).

One can recognise a CoA carboxyltransferase C-terminal domain in the interval 36–290; sequence LLEERLARLR…KEALLKALEE (255 aa).

It belongs to the AccA family. As to quaternary structure, acetyl-CoA carboxylase is a heterohexamer composed of biotin carboxyl carrier protein (AccB), biotin carboxylase (AccC) and two subunits each of ACCase subunit alpha (AccA) and ACCase subunit beta (AccD).

It is found in the cytoplasm. The enzyme catalyses N(6)-carboxybiotinyl-L-lysyl-[protein] + acetyl-CoA = N(6)-biotinyl-L-lysyl-[protein] + malonyl-CoA. Its pathway is lipid metabolism; malonyl-CoA biosynthesis; malonyl-CoA from acetyl-CoA: step 1/1. Its function is as follows. Component of the acetyl coenzyme A carboxylase (ACC) complex. First, biotin carboxylase catalyzes the carboxylation of biotin on its carrier protein (BCCP) and then the CO(2) group is transferred by the carboxyltransferase to acetyl-CoA to form malonyl-CoA. This chain is Acetyl-coenzyme A carboxylase carboxyl transferase subunit alpha, found in Thermus thermophilus (strain ATCC 27634 / DSM 579 / HB8).